A 269-amino-acid polypeptide reads, in one-letter code: 5'-nucleotidase SurE (269 aa).

Positions 11, 12, 43, and 101 each coordinate a divalent metal cation.

The protein belongs to the SurE nucleotidase family. The cofactor is a divalent metal cation.

It is found in the cytoplasm. The enzyme catalyses a ribonucleoside 5'-phosphate + H2O = a ribonucleoside + phosphate. Functionally, nucleotidase that shows phosphatase activity on nucleoside 5'-monophosphates. The sequence is that of 5'-nucleotidase SurE from Prochlorococcus marinus (strain MIT 9313).